A 396-amino-acid chain; its full sequence is Na(+)/H(+) antiporter NhaA (396 aa).

The next 11 membrane-spanning stretches (helical) occupy residues Gly16–Gly36, Leu59–Val79, Thr95–Phe115, Ala124–Leu144, Val154–Phe174, Gln178–Asn198, Leu213–Val233, Ala254–Val274, Gly278–Ile298, Ile328–Leu348, and Leu363–Ala383.

Belongs to the NhaA Na(+)/H(+) (TC 2.A.33) antiporter family.

It localises to the cell inner membrane. It carries out the reaction Na(+)(in) + 2 H(+)(out) = Na(+)(out) + 2 H(+)(in). Its function is as follows. Na(+)/H(+) antiporter that extrudes sodium in exchange for external protons. The sequence is that of Na(+)/H(+) antiporter NhaA from Aeromonas hydrophila subsp. hydrophila (strain ATCC 7966 / DSM 30187 / BCRC 13018 / CCUG 14551 / JCM 1027 / KCTC 2358 / NCIMB 9240 / NCTC 8049).